The following is a 151-amino-acid chain: tRNA-specific adenosine deaminase (151 aa).

The region spanning 4 to 122 (NRDSYWMKIA…PFLKKIFINL (119 aa)) is the CMP/dCMP-type deaminase domain. His55 serves as a coordination point for Zn(2+). Glu57 acts as the Proton donor in catalysis. Cys85 and Cys88 together coordinate Zn(2+).

This sequence belongs to the cytidine and deoxycytidylate deaminase family. In terms of assembly, homodimer. Zn(2+) serves as cofactor.

The catalysed reaction is adenosine(34) in tRNA + H2O + H(+) = inosine(34) in tRNA + NH4(+). In terms of biological role, catalyzes the deamination of adenosine to inosine at the wobble position 34 of tRNA(Arg2). This is tRNA-specific adenosine deaminase from Buchnera aphidicola subsp. Schizaphis graminum (strain Sg).